Here is a 525-residue protein sequence, read N- to C-terminus: Protein MGF 505-6R (525 aa).

ANK repeat units follow at residues 54-83, 129-158, 261-291, and 324-351; these read SIND…NLHY, ACDF…LLNV, NIHR…APNT, and KKLV…NLVD.

Belongs to the asfivirus MGF 505 family.

Plays a role in virus cell tropism, and may be required for efficient virus replication in macrophages. This Ornithodoros (relapsing fever ticks) protein is Protein MGF 505-6R.